The primary structure comprises 1006 residues: Transmembrane channel-like protein 5 (1006 aa).

Residues 1–289 (MSAYYRNNWS…DDPVGSLWGE (289 aa)) form a disordered region. Residues 1–458 (MSAYYRNNWS…YFNFLRWLLK (458 aa)) are Extracellular-facing. 3 stretches are compositionally biased toward polar residues: residues 20–30 (SGSQNRTQGYL), 50–59 (TRSNPYSVAS), and 76–101 (RSLS…SPDH). Positions 138–149 (AGSSSSGNYAGS) are enriched in low complexity. Residues 239 to 250 (REPDYSDAENGH) are compositionally biased toward basic and acidic residues. The helical transmembrane segment at 459 to 479 (FNIFSFILNFSFIIIPQFTVA) threads the bilayer. At 480 to 485 (KKNTLQ) the chain is on the cytoplasmic side. Residues 486–508 (FTGLEFFTGVGYFRDTVMYYGFY) form a helical membrane-spanning segment. Residues 509–525 (TNSTIQHGNSGASYNMQ) are Extracellular-facing. The chain crosses the membrane as a helical span at residues 526 to 546 (LAYIFTIGACLTTCFFSLLFS). Residues 547 to 619 (MAKYFRNNFI…NQLLTRFSAY (73 aa)) lie on the Cytoplasmic side of the membrane. Residues 620–640 (MVAWVVSTGVAIACCAAVYYL) form a helical membrane-spanning segment. Residues 641-654 (AEYNLEFLKTHSNP) lie on the Extracellular side of the membrane. Residues 655–675 (GAVLLLPFVVSCINLAVPCIY) form a helical membrane-spanning segment. Residues 676–698 (SMFRLVERYEMPRHEVYVLLIRN) are Cytoplasmic-facing. The helical transmembrane segment at 699–719 (IFLKISIIGILCYYWLNTVAL) threads the bilayer. The Extracellular portion of the chain corresponds to 720–732 (SGEECWETLIGQD). The helical transmembrane segment at 733–753 (IYRLLLMDFVFSLVNSFLGEF) threads the bilayer. Residues 754-786 (LRRIIGMQLITSLGLQEFDIARNVLELIYAQTL) lie on the Cytoplasmic side of the membrane. Residues 787–807 (VWIGIFFCPLLPFIQMIMLFI) form a helical membrane-spanning segment. Topologically, residues 808–835 (MFYSKNISLMMNFQPPSKAWRASQMMTF) are extracellular. The chain crosses the membrane as a helical span at residues 836 to 856 (FIFLLFFPSFTGVLCTLAITI). Over 857–900 (WRLKPSADCGPFRGLPLFIHSIYSWIDTLSTRPGYLWVVWIYRN) the chain is Cytoplasmic. Residues 901–921 (LIGSVHFFFILTLIVLIITYL) form a helical membrane-spanning segment. At 922 to 1006 (YWQITEGRKI…RSVQEGNPRA (85 aa)) the chain is on the extracellular side.

It belongs to the TMC family.

The protein localises to the membrane. Functionally, probable component of an ion channel. Molecular function hasn't been characterized yet. This Homo sapiens (Human) protein is Transmembrane channel-like protein 5.